A 333-amino-acid chain; its full sequence is DNA-directed RNA polymerase subunit alpha (333 aa).

The alpha N-terminal domain (alpha-NTD) stretch occupies residues 1-239; that stretch reads MSAVLDKGSL…TQARCFLNIA (239 aa). Residues 259-333 form an alpha C-terminal domain (alpha-CTD) region; sequence DASDLLSARI…SLGMNLDSHG (75 aa).

Belongs to the RNA polymerase alpha chain family. Homodimer. The RNAP catalytic core consists of 2 alpha, 1 beta, 1 beta' and 1 omega subunit. When a sigma factor is associated with the core the holoenzyme is formed, which can initiate transcription.

It catalyses the reaction RNA(n) + a ribonucleoside 5'-triphosphate = RNA(n+1) + diphosphate. Its function is as follows. DNA-dependent RNA polymerase catalyzes the transcription of DNA into RNA using the four ribonucleoside triphosphates as substrates. This is DNA-directed RNA polymerase subunit alpha from Neorickettsia sennetsu (strain ATCC VR-367 / Miyayama) (Ehrlichia sennetsu).